Reading from the N-terminus, the 765-residue chain is MEEKYGGDVLAGPGGGGGLGPVDVPSARLTKYIVLLCFTKFLKAVGLFESYDLLKAVHIVQFIFILKLGTAFFMVLFQKPFSSGKTITKHQWIKIFKHAVAGCIISLLWFFGLTLCGPLRTLLLFEHSDIVVISLLSVLFTSSGGGPAKTRGAAFFIIAVICLLLFDNDDLMAKMAEHPEGHHDSALTHMLYTAIAFLGVADHKGGVLLLVLALCCKVGFHTASRKLSVDVGGAKRLQALSHLVSVLLLCPWVIVLSVTTESKVESWFSLIMPFATVIFFVMILDFYVDSICSVKMEVSKCARYGSFPIFISALLFGNFWTHPITDQLRAMNKAAHQESTEHVLSGGVVVSAIFFILSANILSSPSKRGQKGTLIGYSPEGTPLYNFMGDAFQHSSQSIPRFIKESLKQILEESDSRQIFYFLCLNLLFTFVELFYGVLTNSLGLISDGFHMLFDCSALVMGLFAALMSRWKATRIFSYGYGRIEILSGFINGLFLIVIAFFVFMESVARLIDPPELDTHMLTPVSVGGLIVNLIGICAFSHAHSHAHGASQGSCHSSDHSHSHHMHGHSDHGHGHSHGSAGGGMNANMRGVFLHVLADTLGSIGVIVSTVLIEQFGWFIADPLCSLFIAILIFLSVVPLIKDACQVLLLRLPPEYEKELHIALEKIQKIEGLISYRDPHFWRHSASIVAGTIHIQVTSDVLEQRIVQQVTGILKDAGVNNLTIQVEKEAYFQHMSGLSTGFHDVLAMTKQMESMKYCKDGTYIM.

Methionine 1 is subject to N-acetylmethionine. Residues methionine 1 to tyrosine 32 lie on the Cytoplasmic side of the membrane. The helical transmembrane segment at isoleucine 33–leucine 53 threads the bilayer. Over leucine 54–alanine 56 the chain is Lumenal. Residues valine 57–phenylalanine 77 form a helical membrane-spanning segment. Topologically, residues glutamine 78–histidine 98 are cytoplasmic. Residues alanine 99 to leucine 119 form a helical membrane-spanning segment. A topological domain (lumenal) is located at residue arginine 120. The chain crosses the membrane as a helical span at residues threonine 121 to threonine 141. Over serine 142–glycine 152 the chain is Cytoplasmic. Residues alanine 153–alanine 173 form a helical membrane-spanning segment. Topologically, residues lysine 174 to threonine 193 are lumenal. The helical transmembrane segment at alanine 194–leucine 214 threads the bilayer. At cysteine 215–glutamine 238 the chain is on the cytoplasmic side. A helical transmembrane segment spans residues alanine 239–threonine 259. Topologically, residues threonine 260 to tryptophan 267 are lumenal. A helical transmembrane segment spans residues phenylalanine 268–valine 288. The Cytoplasmic portion of the chain corresponds to aspartate 289–arginine 303. A helical membrane pass occupies residues tyrosine 304–isoleucine 324. Residues threonine 325–histidine 342 are Lumenal-facing. Residues valine 343–serine 363 form a helical membrane-spanning segment. The Cytoplasmic portion of the chain corresponds to serine 364–glutamine 418. A helical transmembrane segment spans residues isoleucine 419 to leucine 439. Positions phenylalanine 420–leucine 640 are mediates homodimerization with SLC30A6. The Lumenal portion of the chain corresponds to threonine 440 to aspartate 448. A helical transmembrane segment spans residues glycine 449–serine 469. 2 residues coordinate Zn(2+): histidine 451 and aspartate 455. Topologically, residues arginine 470 to arginine 483 are cytoplasmic. Residues isoleucine 484–phenylalanine 504 form a helical membrane-spanning segment. The Lumenal segment spans residues methionine 505 to histidine 520. The helical transmembrane segment at methionine 521–serine 541 threads the bilayer. The his-rich loop; required for zinc transport stretch occupies residues histidine 542–histidine 578. Over histidine 542–valine 592 the chain is Cytoplasmic. Residues serine 551 to alanine 581 form a disordered region. A helical transmembrane segment spans residues phenylalanine 593–isoleucine 613. Residues histidine 595 and aspartate 599 each contribute to the Zn(2+) site. Over glutamate 614–glycine 617 the chain is Lumenal. Residues tryptophan 618–valine 638 traverse the membrane as a helical segment. Over proline 639–methionine 765 the chain is Cytoplasmic.

The protein belongs to the cation diffusion facilitator (CDF) transporter (TC 2.A.4) family. SLC30A subfamily. As to quaternary structure, heterodimer with SLC30A6/ZNT6; form a functional zinc ion transmembrane transporter. Could homodimerize through the formation of dityrosine bonds upon oxidative stress. As to expression, ubiquitously expressed. Highly expressed in pancreas, liver and kidney. Expressed abundantly in insulin-containing beta cells, undetectable in other endocrine cell types including glucagon-secreting alpha cells and most acinar cells (at protein level).

The protein localises to the golgi apparatus. The protein resides in the golgi stack membrane. It is found in the cytoplasmic vesicle. It localises to the COPII-coated vesicle membrane. Its subcellular location is the secretory vesicle membrane. The protein localises to the trans-Golgi network membrane. The protein resides in the endoplasmic reticulum membrane. It is found in the cell membrane. It localises to the apical cell membrane. The catalysed reaction is Zn(2+)(in) + 2 H(+)(out) = Zn(2+)(out) + 2 H(+)(in). In terms of biological role, together with SLC30A6 forms a functional proton-coupled zinc ion antiporter mediating zinc entry into the lumen of organelles along the secretory pathway. By contributing to zinc ion homeostasis within the early secretory pathway, regulates the activation and folding of enzymes like alkaline phosphatases and enzymes involved in phosphatidylinositol glycan anchor biosynthesis. Through the transport of zinc into secretory granules of pancreatic beta-cells, plays an important role in the storage and secretion of insulin. Zinc ion:proton antiporter mediating influx and efflux of zinc at the plasma membrane. The polypeptide is Proton-coupled zinc antiporter SLC30A5 (Homo sapiens (Human)).